The following is a 313-amino-acid chain: Formimidoylglutamase (313 aa).

Positions 130, 155, 157, 159, 241, and 243 each coordinate Mn(2+).

The protein belongs to the arginase family. Requires Mn(2+) as cofactor.

It catalyses the reaction N-formimidoyl-L-glutamate + H2O = formamide + L-glutamate. Its pathway is amino-acid degradation; L-histidine degradation into L-glutamate; L-glutamate from N-formimidoyl-L-glutamate (hydrolase route): step 1/1. Functionally, catalyzes the conversion of N-formimidoyl-L-glutamate to L-glutamate and formamide. This is Formimidoylglutamase from Salmonella paratyphi B (strain ATCC BAA-1250 / SPB7).